A 682-amino-acid chain; its full sequence is Pneumocandin biosynthesis cluster protein B (682 aa).

A compositionally biased stretch (low complexity) spans 63-73; sequence SSLSSTEVTSS. Disordered regions lie at residues 63 to 86, 107 to 129, and 251 to 358; these read SSLS…DAPE, QNTP…DTNQ, and SEST…SPAN. 2 stretches are compositionally biased toward polar residues: residues 257–279 and 310–320; these read NTGS…SHSS and PRQTTEATPCD. Residues 335-349 show a composition bias toward basic and acidic residues; it reads PERRSMKMVRKEARD.

Part of the gene cluster that mediates the biosynthesis of pneumocandins, lipohexapeptides of the echinocandin family that prevent fungal cell wall formation by non-competitive inhibition of beta-1,3-glucan synthase. The 10,12-dimethylmyristoyl side chain is synthesized by the reducing polyketide synthase gloL/GLPKS4. The thioesterase gloN/GLHYD exclusively interacts with gloL/GLPKS4 to maintain turnover of the polyketide side chain. The 10R,12S-dimethylmyristic acid is then transferred to the first thiolation domain of the nonribosomal peptide synthetase gloA/GLNRPS4 by the acyl-AMP ligase gloD/GLligase, followed by its acylation to L-ornithine to trigger elongation of the cyclic hexapeptide. L-ornithine, 4R-hydroxyl-L-proline (generated from L-proline by the dioxygenase gloF/GLOXY2), 3S-hydroxyl-L-homotyrosine (generated by gloG/GLHtyB, gloH/GLHtyA, gloI/GLHtyC, gloJ/GLHtyD and hydroxylated at C-3 by the dioxygenase gloM/GLOXY1), 3R-hydroxyl-L-glutamine (generated from L-glutamine probably by the dioxygenase gloE/GLOXY3) and 3S-hydroxyl-L-proline (generated from L-proline by the dioxygenase gloF/GLOXY2 to yield pneumocandin B0), or 3S-hydroxyl-4S-methyl-L-proline (generated from L-leucine by the dioxygenase gloC/GLOXY4 to yield pneumocandin A0) are sequentially added to the growing chain. The last C domain of gloA/GLNRPS4 is proposed to be responsible for cyclization by condensation to form the peptide bond between L-ornithine and 3S-hydroxyl-4S-methyl-L-proline (for pneumocandin A0) or 3S-hydroxyl-L-proline (for pneumocandin B0). Finally, the subsequent C-4 hydroxylation of 3S-hydroxyl-L-homotyrosine and L-ornithine dihydroxylation at C-4 and C-5 are performed by the cytochrome P450 monooxygenases gloP/GLP450-1 and gloO/GLP450-2, respectively. The protein is Pneumocandin biosynthesis cluster protein B of Glarea lozoyensis (strain ATCC 20868 / MF5171).